The primary structure comprises 260 residues: Repetitive secreted protein 1 (260 aa).

The first 20 residues, 1 to 20 (MKLSFTIVATAALVASCTFA), serve as a signal peptide directing secretion.

Rsp1 is processed by the subtilisin-like endoprotease kex2. Cleavage by kex2 generates 11 peptides.

It is found in the secreted. In terms of biological role, repetitive secreted protein essential for pathogenic development. Hum3 and rsp1 together are pathogenicity proteins that share an essential function in early stages of the infection. In Mycosarcoma maydis (Corn smut fungus), this protein is Repetitive secreted protein 1.